Reading from the N-terminus, the 1034-residue chain is MKQVKSVNFRELDKKVKEYWKKENTYKKVKALNEHGPEYYFVDGPPYCSGAIHLGTAWNKIIKDTVLRFKRIQGYNVLDKAGWDMHGLPIEVKVENEFNIGSKKDIETKIGTQEFINKCKEFALNHLGHMQGQFENLGVWLDFENAYMPIKRDYMEMGWWTLKKAHEKELLTKDLRSGYWCPRCETSLAEHEVRGEYKEVLDPSVYVKFKLEKSDEYITIWTTTPWTLPSNMLVCVNPEFDYAYVNVEFENGTAETWIIAEKLVNDVMKKAEKNNDISKFSISKVVKGDSLIGLKYIHPLLEENEKQQEFAKIENVHTIVPGDHVTLEGGTGLVHTAPGFGEDDFNIGKEHNIPVYAPIDDNGKYTDSIWKGTFVKDMDESVIETLISKNLLVNSGKVKHTYPHCWRCKTPLLFRATEQWFLSISKIKDSIIEQGKTVDWVPDWVKTRYVNGVSFVGDWNISRQRYWGIPLPIWICEECGNYEVIGSVDELKERANEKDVDLSDIHKPAVDKITLTCSCGGKMKRTPDVLDVWYDSGLAPYASIGSKKLKKAQFITEGNDQVTKWFYSQHALSAVVFDDTSYEKCMMHGFTLDETGEKMSKSLGNIVSPDDVTEQYGADVLRFYLLSANKAWEDLRFSYSEMDETRSMLNTLWNSYAFSANYMVLDDFVPNNEYFKHVKDEDAWILSRINTVAKEAVEALEKPHLHVYTWALRDFILNDFSRWYIKLIRDRTWMEKNDVQKLSAYQTLYYVIMKLISIMAPVTPHLSEEIYQNLKTEDMPESIFMNKLTIESEFINETLEKDTEIIREIVDSILKGRDKAKYTLRYPITKITLPENIAETVEKYGYIIKEQGNVKEIELKEFEGNITVKPNFKELGKIFRSDVPKVVAAINSVAPNELKEKLKSGNFEVSEYEIKPEYVEFRVEIPENIVGVEFSKGNVYINIEMNDEVIKEGLVREVVRRIQSMRKDMDLDINEKINVKLEGIDFSSDYLSHIANEVRGNFVESLKSDYNQKWTIKTPNEETYDISIDIEKNK.

The 'HIGH' region motif lies at 46–56 (PYCSGAIHLGT). The 'KMSKS' region motif lies at 598–602 (KMSKS). Lysine 601 lines the ATP pocket.

This sequence belongs to the class-I aminoacyl-tRNA synthetase family. IleS type 2 subfamily. In terms of assembly, monomer. The cofactor is Zn(2+).

The protein resides in the cytoplasm. It catalyses the reaction tRNA(Ile) + L-isoleucine + ATP = L-isoleucyl-tRNA(Ile) + AMP + diphosphate. Functionally, catalyzes the attachment of isoleucine to tRNA(Ile). As IleRS can inadvertently accommodate and process structurally similar amino acids such as valine, to avoid such errors it has two additional distinct tRNA(Ile)-dependent editing activities. One activity is designated as 'pretransfer' editing and involves the hydrolysis of activated Val-AMP. The other activity is designated 'posttransfer' editing and involves deacylation of mischarged Val-tRNA(Ile). The chain is Isoleucine--tRNA ligase from Methanococcus maripaludis (strain DSM 14266 / JCM 13030 / NBRC 101832 / S2 / LL).